We begin with the raw amino-acid sequence, 235 residues long: Putative homeobox-leucine zipper protein ATHB-51 (235 aa).

Positions 74-133 (EMIKKKRLTSGQLASLERSFQEEIKLDSDRKVKLSRELGLQPRQIAVWFQNRRARWKAKQ) form a DNA-binding region, homeobox. Positions 134 to 162 (LEQLYDSLRQEYDVVSREKQMLHDEVKKL) are leucine-zipper.

This sequence belongs to the HD-ZIP homeobox family. Class I subfamily. In terms of tissue distribution, widely expressed.

The protein resides in the nucleus. Putative transcription factor. This chain is Putative homeobox-leucine zipper protein ATHB-51 (ATHB-51), found in Arabidopsis thaliana (Mouse-ear cress).